A 1377-amino-acid polypeptide reads, in one-letter code: DNA-directed RNA polymerase subunit beta (1377 aa).

This sequence belongs to the RNA polymerase beta chain family. As to quaternary structure, the RNAP catalytic core consists of 2 alpha, 1 beta, 1 beta' and 1 omega subunit. When a sigma factor is associated with the core the holoenzyme is formed, which can initiate transcription.

The enzyme catalyses RNA(n) + a ribonucleoside 5'-triphosphate = RNA(n+1) + diphosphate. DNA-dependent RNA polymerase catalyzes the transcription of DNA into RNA using the four ribonucleoside triphosphates as substrates. The polypeptide is DNA-directed RNA polymerase subunit beta (Aromatoleum aromaticum (strain DSM 19018 / LMG 30748 / EbN1) (Azoarcus sp. (strain EbN1))).